The sequence spans 400 residues: MTKTFKKFSIAGLALLFMATAAFAGWSTKASAADMRSLTAAQITAEMGAGWNLGNQLEATVNGTPNETSWGNPTITPELIKKVKAAGFKTIRIPVSYLNYIGSAPNYTVNASWLNRIQQVVDYAYNEGLYVVINMHGDGFHSIPGSWLHVNSSNQNVIRDKYQKVWQQVATRFSAYNERLIFESMNEVFDGNYNNPNTSYYGNLNAYNQIFVDTVRKTGGNNNARWLLVPGWNTNIDYTVGNYGFVVPTDNFRSSAIPSSQKRIMISAHYYSPWDFAGEENGNITQWGATATNPAKRSTWGQEDYLDSQFKSMYDKFVTQGYPVVMGEFGSIDKSSYDSSNNNYRAVYAKAVTATAKKYKLVPVYWDNGFNGQHGFALFNRFNNTVTQQNIINAIMQGMQ.

The first 32 residues, 1 to 32, serve as a signal peptide directing secretion; that stretch reads MTKTFKKFSIAGLALLFMATAAFAGWSTKASA. The Proton donor role is filled by glutamate 187. Glutamate 328 acts as the Nucleophile in catalysis.

The protein belongs to the glycosyl hydrolase 5 (cellulase A) family.

It localises to the secreted. It catalyses the reaction Endohydrolysis of (1-&gt;4)-beta-D-glucosidic linkages in cellulose, lichenin and cereal beta-D-glucans.. With respect to regulation, strongly inhibited by Hg(2+), Ag(+) and Fe(3+). To a lesser extent, is also inhibited by Pb(2+), Mn(2+), Sn(2+) and Cu(2+). By contrast, Ni(2+), Zn(2+), Co(2+), Ba(2+) and NH(4)(+) do not affect enzyme activity, while 10 mM Ca(2+), and Mg(2+) produce a stimulating effect. Is also strongly inhibited by chemicals such as N-bromosuccinimide and dimethyl(2-dihydroxy-5-nitrobenzyl)sulphonium bromide. Is not affected by N-acetylimidazole. In terms of biological role, endoglucanase with high activity on carboxymethylcellulose (CMC) and lichenan, but not active on Avicel. This Paenibacillus barcinonensis protein is Endoglucanase A (celA).